The chain runs to 316 residues: Probable cell division protein WhiA (316 aa).

The H-T-H motif DNA-binding region spans 275 to 309; the sequence is TLKELGEMVSGGKISKSGINHRLRKIDEIAEKLRA.

This sequence belongs to the WhiA family.

In terms of biological role, involved in cell division and chromosome segregation. The sequence is that of Probable cell division protein WhiA from Bacillus mycoides (strain KBAB4) (Bacillus weihenstephanensis).